Here is a 660-residue protein sequence, read N- to C-terminus: Acetyl-coenzyme A synthetase (660 aa).

Residues R197–K200 and T317 each bind CoA. ATP-binding positions include G397 to P399, D421 to T426, D512, and R528. S536 is a CoA binding site. R539 is a binding site for ATP. Mg(2+) contacts are provided by V550 and V555. Position 625 is an N6-acetyllysine (K625).

The protein belongs to the ATP-dependent AMP-binding enzyme family. Mg(2+) serves as cofactor. In terms of processing, acetylated. Deacetylation by the SIR2-homolog deacetylase activates the enzyme.

It carries out the reaction acetate + ATP + CoA = acetyl-CoA + AMP + diphosphate. Catalyzes the conversion of acetate into acetyl-CoA (AcCoA), an essential intermediate at the junction of anabolic and catabolic pathways. AcsA undergoes a two-step reaction. In the first half reaction, AcsA combines acetate with ATP to form acetyl-adenylate (AcAMP) intermediate. In the second half reaction, it can then transfer the acetyl group from AcAMP to the sulfhydryl group of CoA, forming the product AcCoA. The protein is Acetyl-coenzyme A synthetase of Cupriavidus pinatubonensis (strain JMP 134 / LMG 1197) (Cupriavidus necator (strain JMP 134)).